We begin with the raw amino-acid sequence, 513 residues long: Sphingosine-1-phosphate transporter SPNS2 (513 aa).

The next 11 membrane-spanning stretches (helical) occupy residues 102–122 (GLLQ…FGYL), 130–150 (VILS…SFIP), 163–183 (LVGI…GDLF), 190–210 (LMLS…YITG), 222–242 (WALR…LIFV), 276–296 (LATS…PLYL), 320–340 (LIFG…GAGA), 354–374 (LVCA…FVAA), 378–398 (IIAA…NWAI), 422–442 (TSHL…SDLI), and 463–483 (LCPF…LFFL).

This sequence belongs to the major facilitator superfamily. Spinster (TC 2.A.1.49) family.

The protein localises to the cell membrane. It is found in the endosome membrane. It catalyses the reaction sphing-4-enine 1-phosphate(in) = sphing-4-enine 1-phosphate(out). It carries out the reaction sphinganine 1-phosphate(in) = sphinganine 1-phosphate(out). Its function is as follows. Lipid transporter that specifically mediates export of sphingosine-1-phosphate (sphing-4-enine 1-phosphate, S1P) and sphinganine-1-phosphate. This chain is Sphingosine-1-phosphate transporter SPNS2 (spns2), found in Xenopus tropicalis (Western clawed frog).